The sequence spans 120 residues: Spermidine export protein MdtJ (120 aa).

Helical transmembrane passes span 1-21 (MFYWILLALAIAAEITGTLSM), 31-51 (TGFILMLVMITLSYIFLSFAV), 54-74 (IALGVAYALWEGIGILFITLF), and 81-101 (EALSAMKIAGLVTLVFGIALI).

The protein belongs to the drug/metabolite transporter (DMT) superfamily. Small multidrug resistance (SMR) (TC 2.A.7.1) family. MdtJ subfamily. As to quaternary structure, forms a complex with MdtI.

It localises to the cell inner membrane. In terms of biological role, catalyzes the excretion of spermidine. The sequence is that of Spermidine export protein MdtJ from Citrobacter koseri (strain ATCC BAA-895 / CDC 4225-83 / SGSC4696).